A 218-amino-acid chain; its full sequence is Octanoyltransferase (218 aa).

The BPL/LPL catalytic domain occupies 34 to 209 (ETSRDELWIV…TFSQELGYQH (176 aa)). Substrate-binding positions include 73 to 80 (RGGQVTYH), 140 to 142 (SLG), and 153 to 155 (GLA). The active-site Acyl-thioester intermediate is Cys171.

This sequence belongs to the LipB family.

It localises to the cytoplasm. It catalyses the reaction octanoyl-[ACP] + L-lysyl-[protein] = N(6)-octanoyl-L-lysyl-[protein] + holo-[ACP] + H(+). Its pathway is protein modification; protein lipoylation via endogenous pathway; protein N(6)-(lipoyl)lysine from octanoyl-[acyl-carrier-protein]: step 1/2. In terms of biological role, catalyzes the transfer of endogenously produced octanoic acid from octanoyl-acyl-carrier-protein onto the lipoyl domains of lipoate-dependent enzymes. Lipoyl-ACP can also act as a substrate although octanoyl-ACP is likely to be the physiological substrate. In Shewanella loihica (strain ATCC BAA-1088 / PV-4), this protein is Octanoyltransferase.